A 470-amino-acid polypeptide reads, in one-letter code: Argininosuccinate lyase (470 aa).

This sequence belongs to the lyase 1 family. Argininosuccinate lyase subfamily.

Its subcellular location is the cytoplasm. It carries out the reaction 2-(N(omega)-L-arginino)succinate = fumarate + L-arginine. The protein operates within amino-acid biosynthesis; L-arginine biosynthesis; L-arginine from L-ornithine and carbamoyl phosphate: step 3/3. This chain is Argininosuccinate lyase, found in Leptospira interrogans serogroup Icterohaemorrhagiae serovar copenhageni (strain Fiocruz L1-130).